A 132-amino-acid polypeptide reads, in one-letter code: Fumarate reductase subunit C (132 aa).

A run of 3 helical transmembrane segments spans residues 30-50, 70-90, and 110-130; these read ATSVFAVWFCIVLLYGVLCFA, IVVFLNIITLIATLYHTVTYF, and VVRNALWAVTALVSVIALVLV.

This sequence belongs to the FrdC family. As to quaternary structure, part of an enzyme complex containing four subunits: a flavoprotein (FrdA), an iron-sulfur protein (FrdB), and two hydrophobic anchor proteins (FrdC and FrdD).

The protein resides in the cell inner membrane. Functionally, anchors the catalytic components of the fumarate reductase complex to the cell membrane, binds quinones. This chain is Fumarate reductase subunit C, found in Haemophilus influenzae (strain ATCC 51907 / DSM 11121 / KW20 / Rd).